A 149-amino-acid polypeptide reads, in one-letter code: Transcriptional repressor NrdR (149 aa).

Residues 3–34 (CPFCSATDTKVIDSRLVAEGHQVRRRRECTEC) fold into a zinc finger. The ATP-cone domain occupies 49 to 139 (PRVIKRDGSR…VYRAFEDVSE (91 aa)).

It belongs to the NrdR family. Requires Zn(2+) as cofactor.

Its function is as follows. Negatively regulates transcription of bacterial ribonucleotide reductase nrd genes and operons by binding to NrdR-boxes. In Shewanella baltica (strain OS223), this protein is Transcriptional repressor NrdR.